A 375-amino-acid chain; its full sequence is MQCALYDAGRCRSCQWITQPIPEQLSAKTADLKNLLADFPVEEWCAPVSGPEQGFRNKAKMVVSGSVEKPLLGMLHRDGTPEDLCDCPLYPASFAPVFAALKPFIARAGLTPYNVARKRGELKYILLTESQSDGGMMLRFVLRSETKLAQLRKALPWLQEQLPQLKVITVNIQPVHMAIMEGETEIYLTEQQALAERFNDVPLWIRPQSFFQTNPAVASQLYATARDWVRQLPVKHMWDLFCGVGGFGLHCATPDMQLTGIEIASEAIACAKQSAAELGLTRLQFQALDSTQFATAQGEVPELVLVNPPRRGIGKPLCDYLSTMAPRFIIYSSCNAQTMAKDIRELPGYRIERVQLFDMFPHTAHYEVLTLLVKQ.

[4Fe-4S] cluster contacts are provided by Cys-3, Cys-11, Cys-14, and Cys-87. S-adenosyl-L-methionine-binding residues include Gln-212, Phe-241, Glu-262, and Asn-307. The active-site Nucleophile is Cys-334.

It belongs to the class I-like SAM-binding methyltransferase superfamily. RNA M5U methyltransferase family. RlmC subfamily.

The catalysed reaction is uridine(747) in 23S rRNA + S-adenosyl-L-methionine = 5-methyluridine(747) in 23S rRNA + S-adenosyl-L-homocysteine + H(+). Catalyzes the formation of 5-methyl-uridine at position 747 (m5U747) in 23S rRNA. This Escherichia coli O139:H28 (strain E24377A / ETEC) protein is 23S rRNA (uracil(747)-C(5))-methyltransferase RlmC.